A 340-amino-acid chain; its full sequence is KRR1 small subunit processome component homolog (340 aa).

In terms of domain architecture, KH spans 124 to 192 (DIIKIGNLVH…VRDIVLETMN (69 aa)). A compositionally biased stretch (basic residues) spans 228–244 (KNKNISKRKQPKSKKPK). Disordered stretches follow at residues 228-259 (KNKN…ESKI) and 271-324 (NQEQ…KVDV). Residues 269–302 (FLNQEQKQAKRNQERSAKQADAAKKQDERRNKDF) are a coiled coil. Composition is skewed to basic and acidic residues over residues 275-301 (KQAK…RNKD) and 309-324 (APSR…KVDV).

This sequence belongs to the KRR1 family. As to quaternary structure, monomer. Component of the ribosomal small subunit (SSU) processome.

It localises to the nucleus. The protein resides in the nucleolus. In terms of biological role, required for 40S ribosome biogenesis. Involved in nucleolar processing of pre-18S ribosomal RNA and ribosome assembly. Binds to RNA. Required for female germline development, cell viability during eye development and for survival of dividing cells and epithelial cells during early wing disk development. The polypeptide is KRR1 small subunit processome component homolog (Drosophila persimilis (Fruit fly)).